The chain runs to 133 residues: Ribosomal silencing factor RsfS (133 aa).

It belongs to the Iojap/RsfS family. In terms of assembly, interacts with ribosomal protein uL14 (rplN).

The protein resides in the cytoplasm. Functions as a ribosomal silencing factor. Interacts with ribosomal protein uL14 (rplN), blocking formation of intersubunit bridge B8. Prevents association of the 30S and 50S ribosomal subunits and the formation of functional ribosomes, thus repressing translation. This Zymomonas mobilis subsp. mobilis (strain ATCC 31821 / ZM4 / CP4) protein is Ribosomal silencing factor RsfS.